The primary structure comprises 638 residues: Fructose-1,6-bisphosphatase class 3 (638 aa).

This sequence belongs to the FBPase class 3 family. The cofactor is Mn(2+).

The catalysed reaction is beta-D-fructose 1,6-bisphosphate + H2O = beta-D-fructose 6-phosphate + phosphate. It participates in carbohydrate biosynthesis; gluconeogenesis. The protein is Fructose-1,6-bisphosphatase class 3 of Pediococcus pentosaceus (strain ATCC 25745 / CCUG 21536 / LMG 10740 / 183-1w).